Consider the following 530-residue polypeptide: Bifunctional purine biosynthesis protein PurH (530 aa).

Residues 1 to 148 form the MGS-like domain; the sequence is MENSRPIKRA…KNHKDVGIVV (148 aa).

Belongs to the PurH family.

It carries out the reaction (6R)-10-formyltetrahydrofolate + 5-amino-1-(5-phospho-beta-D-ribosyl)imidazole-4-carboxamide = 5-formamido-1-(5-phospho-D-ribosyl)imidazole-4-carboxamide + (6S)-5,6,7,8-tetrahydrofolate. The catalysed reaction is IMP + H2O = 5-formamido-1-(5-phospho-D-ribosyl)imidazole-4-carboxamide. It functions in the pathway purine metabolism; IMP biosynthesis via de novo pathway; 5-formamido-1-(5-phospho-D-ribosyl)imidazole-4-carboxamide from 5-amino-1-(5-phospho-D-ribosyl)imidazole-4-carboxamide (10-formyl THF route): step 1/1. It participates in purine metabolism; IMP biosynthesis via de novo pathway; IMP from 5-formamido-1-(5-phospho-D-ribosyl)imidazole-4-carboxamide: step 1/1. This chain is Bifunctional purine biosynthesis protein PurH, found in Psychromonas ingrahamii (strain DSM 17664 / CCUG 51855 / 37).